The chain runs to 256 residues: Deoxyribose-phosphate aldolase (256 aa).

Residue aspartate 102 is the Proton donor/acceptor of the active site. Lysine 165 acts as the Schiff-base intermediate with acetaldehyde in catalysis. Residue lysine 197 is the Proton donor/acceptor of the active site.

Belongs to the DeoC/FbaB aldolase family. DeoC type 2 subfamily.

Its subcellular location is the cytoplasm. It carries out the reaction 2-deoxy-D-ribose 5-phosphate = D-glyceraldehyde 3-phosphate + acetaldehyde. The protein operates within carbohydrate degradation; 2-deoxy-D-ribose 1-phosphate degradation; D-glyceraldehyde 3-phosphate and acetaldehyde from 2-deoxy-alpha-D-ribose 1-phosphate: step 2/2. Functionally, catalyzes a reversible aldol reaction between acetaldehyde and D-glyceraldehyde 3-phosphate to generate 2-deoxy-D-ribose 5-phosphate. The protein is Deoxyribose-phosphate aldolase of Shewanella sp. (strain ANA-3).